The sequence spans 149 residues: Transcriptional regulator MraZ (149 aa).

SpoVT-AbrB domains lie at arginine 6–aspartate 52 and valine 81–glutamate 124.

Belongs to the MraZ family. In terms of assembly, forms oligomers.

It localises to the cytoplasm. It is found in the nucleoid. In Oleidesulfovibrio alaskensis (strain ATCC BAA-1058 / DSM 17464 / G20) (Desulfovibrio alaskensis), this protein is Transcriptional regulator MraZ.